The sequence spans 250 residues: Small ribosomal subunit protein uS2 (250 aa).

This sequence belongs to the universal ribosomal protein uS2 family.

This Polaromonas naphthalenivorans (strain CJ2) protein is Small ribosomal subunit protein uS2.